The chain runs to 152 residues: Ribosome maturation factor RimP (152 aa).

The protein belongs to the RimP family.

It localises to the cytoplasm. In terms of biological role, required for maturation of 30S ribosomal subunits. This Brevibacillus brevis (strain 47 / JCM 6285 / NBRC 100599) protein is Ribosome maturation factor RimP.